The primary structure comprises 376 residues: Lipoprotein p33 (376 aa).

Positions 1 to 30 are cleaved as a signal peptide; sequence MKIKKIKLLKALALTGAFGIVATVPVIVSS. C31 carries the N-palmitoyl cysteine lipid modification. C31 is lipidated: S-diacylglycerol cysteine. A disordered region spans residues 33–59; that stretch reads STDNNGGTGDNNTGGGGSGTDQQQGTT. The segment covering 38–51 has biased composition (gly residues); that stretch reads GGTGDNNTGGGGSG.

The protein belongs to the p35 lipoprotein family.

The protein localises to the cell membrane. This is Lipoprotein p33 from Malacoplasma penetrans (strain HF-2) (Mycoplasma penetrans).